The following is a 1591-amino-acid chain: Dicer-like protein 1 (1591 aa).

2 stretches are compositionally biased toward basic and acidic residues: residues 1–20 (MEVH…RYDD) and 41–52 (SKPRKISERKRA). Residues 1-52 (MEVHDGLKSPDKAAKSRYDDDRIDQDSEDEAVRLVANPDPSKPRKISERKRA) form a disordered region. The Helicase ATP-binding domain maps to 115 to 298 (LFERAKQKNT…SYERATHELE (184 aa)). Residue 128-135 (LDTGTGKT) coordinates ATP. The DEAH box motif lies at 242-245 (DEAH). The Helicase C-terminal domain maps to 439-607 (KLIEILAECF…CLSLPKDRIM (169 aa)). Positions 639-729 (SLVVLAEFVA…KSTLAKVLPA (91 aa)) constitute a Dicer dsRNA-binding fold domain. Residues 888 to 1012 (TTTDRVPYNF…LVLETLLISQ (125 aa)) form the PAZ domain. 2 RNase III domains span residues 1050 to 1190 (IDIA…LTAQ) and 1243 to 1406 (CSQI…VDTG). 3 residues coordinate Mg(2+): E1283, D1392, and E1395. Residues 1440 to 1514 (THITSIITTQ…AKQAVAIYED (75 aa)) form the DRBM domain. Zn(2+) is bound by residues C1452, H1485, C1526, and C1528.

This sequence belongs to the helicase family. Dicer subfamily. The cofactor is Mg(2+). Mn(2+) serves as cofactor.

In terms of biological role, dicer-like endonuclease which seems not to be involved in cleaving double-stranded RNA in the RNA interference (RNAi) pathway, contrary to its DCL2 counterpart. This chain is Dicer-like protein 1 (DCL1), found in Pyricularia oryzae (strain 70-15 / ATCC MYA-4617 / FGSC 8958) (Rice blast fungus).